Reading from the N-terminus, the 411-residue chain is ATP-dependent Clp protease ATP-binding subunit ClpX (411 aa).

Residues 1–49 (MSDRDIRCSFCGRTQKEVKKLIAGPGVYICDECVKLAYDIIEEDEEEDV) form the ClpX-type ZB domain. Zn(2+) contacts are provided by C8, C11, C30, and C33. Position 115–122 (115–122 (PTGVGKTL)) interacts with ATP.

Belongs to the ClpX chaperone family. In terms of assembly, component of the ClpX-ClpP complex. Forms a hexameric ring that, in the presence of ATP, binds to fourteen ClpP subunits assembled into a disk-like structure with a central cavity, resembling the structure of eukaryotic proteasomes.

Its function is as follows. ATP-dependent specificity component of the Clp protease. It directs the protease to specific substrates. Can perform chaperone functions in the absence of ClpP. The polypeptide is ATP-dependent Clp protease ATP-binding subunit ClpX (Dictyoglomus thermophilum (strain ATCC 35947 / DSM 3960 / H-6-12)).